We begin with the raw amino-acid sequence, 644 residues long: Exoribonuclease 2 (644 aa).

Residues 189–516 (REDLTALDFV…NHRLLKAVIK (328 aa)) enclose the RNB domain. The S1 motif domain maps to 561–643 (DTRFAAEIVD…ETRSIIARPV (83 aa)).

Belongs to the RNR ribonuclease family. RNase II subfamily.

It is found in the cytoplasm. The enzyme catalyses Exonucleolytic cleavage in the 3'- to 5'-direction to yield nucleoside 5'-phosphates.. In terms of biological role, involved in mRNA degradation. Hydrolyzes single-stranded polyribonucleotides processively in the 3' to 5' direction. The chain is Exoribonuclease 2 from Escherichia coli (strain ATCC 8739 / DSM 1576 / NBRC 3972 / NCIMB 8545 / WDCM 00012 / Crooks).